The primary structure comprises 353 residues: Phosphate acyltransferase (353 aa).

The protein belongs to the PlsX family. In terms of assembly, homodimer. Probably interacts with PlsY.

It is found in the cytoplasm. It carries out the reaction a fatty acyl-[ACP] + phosphate = an acyl phosphate + holo-[ACP]. The protein operates within lipid metabolism; phospholipid metabolism. Its function is as follows. Catalyzes the reversible formation of acyl-phosphate (acyl-PO(4)) from acyl-[acyl-carrier-protein] (acyl-ACP). This enzyme utilizes acyl-ACP as fatty acyl donor, but not acyl-CoA. This Rhodopseudomonas palustris (strain ATCC BAA-98 / CGA009) protein is Phosphate acyltransferase.